A 340-amino-acid polypeptide reads, in one-letter code: MKESINILAIESSCDETSAAVVVNGREVLSNIIASQISTHEKFGGVVPEVASRKHIEVISAVVQEALDEANFTLDDIDAIGVTYGPGLVGALLVGLQYAKGLAFATGKPLIGVNHIEGHISANFIEYKDLKPPFMCLVVSGGHTFIVYMKDYGEFEVLGETRDDAAGEAFDKVARAIGLGYPGGPKIDKISKEGNEEAIKFPRANFHNDTLDFSFSGIKSAVLNYLNKKEMKGEEINKADVAASFQKSVVDVLVDNTIKACMSKKVDKIAVAGGVASNSCLRETLVRECKKKGIEVLIPPFILCTDNAAMIGSAAYFEYIKGRSTSLDINAVPNLKLGER.

Residues H115 and H119 each contribute to the Fe cation site. Substrate contacts are provided by residues 138–142 (VVSGG), D171, G184, D188, and N278. Position 306 (D306) interacts with Fe cation.

Belongs to the KAE1 / TsaD family. Fe(2+) is required as a cofactor.

The protein resides in the cytoplasm. The catalysed reaction is L-threonylcarbamoyladenylate + adenosine(37) in tRNA = N(6)-L-threonylcarbamoyladenosine(37) in tRNA + AMP + H(+). Required for the formation of a threonylcarbamoyl group on adenosine at position 37 (t(6)A37) in tRNAs that read codons beginning with adenine. Is involved in the transfer of the threonylcarbamoyl moiety of threonylcarbamoyl-AMP (TC-AMP) to the N6 group of A37, together with TsaE and TsaB. TsaD likely plays a direct catalytic role in this reaction. This Clostridium botulinum (strain Kyoto / Type A2) protein is tRNA N6-adenosine threonylcarbamoyltransferase.